The primary structure comprises 237 residues: Large ribosomal subunit protein uL1 (237 aa).

It belongs to the universal ribosomal protein uL1 family. In terms of assembly, part of the 50S ribosomal subunit.

Functionally, binds directly to 23S rRNA. The L1 stalk is quite mobile in the ribosome, and is involved in E site tRNA release. Its function is as follows. Protein L1 is also a translational repressor protein, it controls the translation of the L11 operon by binding to its mRNA. In Leptothrix cholodnii (strain ATCC 51168 / LMG 8142 / SP-6) (Leptothrix discophora (strain SP-6)), this protein is Large ribosomal subunit protein uL1.